Here is a 42-residue protein sequence, read N- to C-terminus: Photosystem I reaction center subunit IX (42 aa).

Residues 8–28 (YLSTAPVLLTIWLSFTAALVI) traverse the membrane as a helical segment.

It belongs to the PsaJ family.

Its subcellular location is the plastid. It localises to the chloroplast thylakoid membrane. Its function is as follows. May help in the organization of the PsaE and PsaF subunits. The protein is Photosystem I reaction center subunit IX of Guillardia theta (Cryptophyte).